The sequence spans 132 residues: DNA-directed RNA polymerase subunit omega (132 aa).

The tract at residues 89–109 (HSSESESIFNTSSQEEGTSFD) is disordered. Residues 96-105 (IFNTSSQEEG) are compositionally biased toward polar residues.

This sequence belongs to the RNA polymerase subunit omega family. The RNAP catalytic core consists of 2 alpha, 1 beta, 1 beta' and 1 omega subunit. When a sigma factor is associated with the core the holoenzyme is formed, which can initiate transcription.

The catalysed reaction is RNA(n) + a ribonucleoside 5'-triphosphate = RNA(n+1) + diphosphate. Its function is as follows. Promotes RNA polymerase assembly. Latches the N- and C-terminal regions of the beta' subunit thereby facilitating its interaction with the beta and alpha subunits. In Bartonella tribocorum (strain CIP 105476 / IBS 506), this protein is DNA-directed RNA polymerase subunit omega.